The primary structure comprises 282 residues: Undecaprenyl-diphosphatase (282 aa).

5 helical membrane-spanning segments follow: residues 90–110 (YRLGWYVIIGTIPICILGLFF), 121–141 (LWVVVTALVVFSGVIALAEYV), 194–214 (FGFLLAIPAVFASGLFSLPDA), 228–248 (QLLVATLIAFVLGLTAVAWLL), and 256–276 (MYWFVGYRVLVGTGMLVLLAT).

The protein belongs to the UppP family.

Its subcellular location is the cell membrane. The catalysed reaction is di-trans,octa-cis-undecaprenyl diphosphate + H2O = di-trans,octa-cis-undecaprenyl phosphate + phosphate + H(+). Functionally, catalyzes the dephosphorylation of undecaprenyl diphosphate (UPP). Confers resistance to bacitracin. This Mycobacterium tuberculosis (strain ATCC 25618 / H37Rv) protein is Undecaprenyl-diphosphatase.